The chain runs to 502 residues: NAD(P)H-quinone oxidoreductase subunit 2, chloroplastic (502 aa).

14 consecutive transmembrane segments (helical) span residues 15-35 (VLPE…DLIF), 42-62 (VLPY…LFQW), 79-99 (LSIA…LLSI), 108-128 (TLSE…LLCG), 132-152 (ILMI…LTGY), 167-187 (LLIG…LYGL), 210-230 (LASL…IAAA), 253-275 (VSSK…PYII), 278-298 (WHNI…IIAI), 307-327 (LGYS…AGNI), 334-354 (LVYM…VILF), 375-395 (ILAL…PFGG), 413-433 (LLVF…IKII), and 468-488 (ILIC…IISI).

It belongs to the complex I subunit 2 family. NDH is composed of at least 16 different subunits, 5 of which are encoded in the nucleus.

The protein resides in the plastid. The protein localises to the chloroplast thylakoid membrane. It carries out the reaction a plastoquinone + NADH + (n+1) H(+)(in) = a plastoquinol + NAD(+) + n H(+)(out). The catalysed reaction is a plastoquinone + NADPH + (n+1) H(+)(in) = a plastoquinol + NADP(+) + n H(+)(out). Functionally, NDH shuttles electrons from NAD(P)H:plastoquinone, via FMN and iron-sulfur (Fe-S) centers, to quinones in the photosynthetic chain and possibly in a chloroplast respiratory chain. The immediate electron acceptor for the enzyme in this species is believed to be plastoquinone. Couples the redox reaction to proton translocation, and thus conserves the redox energy in a proton gradient. This chain is NAD(P)H-quinone oxidoreductase subunit 2, chloroplastic, found in Mesostigma viride (Green alga).